The following is a 313-amino-acid chain: Competence protein ComGA (313 aa).

ATP is bound at residue 138-145 (GPVGSGKT).

The protein belongs to the GSP E family.

The protein localises to the cell membrane. Its function is as follows. Required for uptake of DNA by competent cells. May be involved in assembly of a complex forming a transformation pilus at the surface of competent cells. The protein is Competence protein ComGA of Streptococcus pneumoniae (strain ATCC BAA-255 / R6).